The primary structure comprises 97 residues: Protein Vpr (97 aa).

The tract at residues 1-42 (MEQAPENQGPAKEPFNEWALELLEELKAEAVRHFPRPWLHAL) is homooligomerization. Residues Ser79, Ser95, and Ser97 each carry the phosphoserine; by host modification.

The protein belongs to the HIV-1 VPR protein family. As to quaternary structure, homooligomer, may form homodimer. Interacts with p6-gag region of the Pr55 Gag precursor protein through a (Leu-X-X)4 motif near the C-terminus of the P6gag protein. Interacts with host UNG. May interact with host RAD23A/HHR23A. Interacts with host VPRBP/DCAF1, leading to hijack the CUL4A-RBX1-DDB1-DCAF1/VPRBP complex, mediating ubiquitination of host proteins such as TERT and ZGPAT and arrest of the cell cycle in G2 phase. Phosphorylated on several residues by host. These phosphorylations regulate VPR activity for the nuclear import of the HIV-1 pre-integration complex.

It is found in the virion. The protein localises to the host nucleus. The protein resides in the host extracellular space. Its function is as follows. During virus replication, may deplete host UNG protein, and incude G2-M cell cycle arrest. Acts by targeting specific host proteins for degradation by the 26S proteasome, through association with the cellular CUL4A-DDB1 E3 ligase complex by direct interaction with host VPRPB/DCAF-1. Cell cycle arrest reportedly occurs within hours of infection and is not blocked by antiviral agents, suggesting that it is initiated by the VPR carried into the virion. Additionally, VPR induces apoptosis in a cell cycle dependent manner suggesting that these two effects are mechanistically linked. Detected in the serum and cerebrospinal fluid of AIDS patient, VPR may also induce cell death to bystander cells. Functionally, during virus entry, plays a role in the transport of the viral pre-integration (PIC) complex to the host nucleus. This function is crucial for viral infection of non-dividing macrophages. May act directly at the nuclear pore complex, by binding nucleoporins phenylalanine-glycine (FG)-repeat regions. The protein is Protein Vpr of Human immunodeficiency virus type 1 group O (isolate ANT70) (HIV-1).